We begin with the raw amino-acid sequence, 475 residues long: 7-dehydrocholesterol reductase (475 aa).

The segment at 1-21 is disordered; that stretch reads MAAKSQPNIPKAKSLDGVTND. Serine 14 carries the phosphoserine modification. A run of 6 helical transmembrane segments spans residues 40-60, 154-174, 177-197, 266-286, 306-326, and 331-351; these read LASV…FIMA, THLL…TIIF, WIPL…FAMV, VTNA…DFFW, LGWG…LYLV, and QLST…YYIF. NADP(+) contacts are provided by residues lysine 358, arginine 362, leucine 395, tryptophan 400, and 407-408; that span reads NY. A helical transmembrane segment spans residues 420–440; that stretch reads LACGGGHLLPYFYIIYMAILL. Residues aspartate 447, 451-455, and tyrosine 462 each bind NADP(+); that span reads CASKY.

The protein belongs to the ERG4/ERG24 family. As to quaternary structure, interacts with DHCR24; this interaction regulates DHCR7 activity. Interacts with TMEM147. As to expression, widely expressed. Most abundant in adrenal gland, liver, testis, and brain.

The protein resides in the endoplasmic reticulum membrane. The enzyme catalyses cholesterol + NADP(+) = 7-dehydrocholesterol + NADPH + H(+). It carries out the reaction 7-dehydrodesmosterol + NADPH + H(+) = desmosterol + NADP(+). The catalysed reaction is 5,6alpha-epoxy-5alpha-cholestan-3beta-ol + H2O = 5alpha-cholestane-3beta,5,6beta-triol. It catalyses the reaction 5,6beta-epoxy-5beta-cholestan-3beta-ol + H2O = 5alpha-cholestane-3beta,5,6beta-triol. It participates in steroid biosynthesis; cholesterol biosynthesis. With respect to regulation, 7-DHC reductase and cholesterol-5,6-epoxide hydrolase (ChEH) activities are inhibited by tamoxifen and the selective AEBS ligand (4-benzyl-phenoxy)-ethyl-N-pyrrolidine (PBPE). ChEH activity is inhibited by oleic acid. Functionally, oxidoreductase that catalyzes the last step of the cholesterol synthesis pathway, which transforms cholesta-5,7-dien-3beta-ol (7-dehydrocholesterol,7-DHC) into cholesterol by reducing the C7-C8 double bond of its sterol core. Can also metabolize cholesta-5,7,24-trien-3beta-ol (7-dehydrodemosterol, 7-DHD) to desmosterol, which is then metabolized by the Delta(24)-sterol reductase (DHCR24) to cholesterol. Modulates ferroptosis (a form of regulated cell death driven by iron-dependent lipid peroxidation) through the metabolic breakdown of the anti-ferroptotic metabolites 7-DHC and 7-DHD which, when accumulated, divert the propagation of peroxyl radical-mediated damage from phospholipid components to its sterol core, protecting plasma and mitochondrial membranes from phospholipid autoxidation. In terms of biological role, component of the microsomal antiestrogen binding site (AEBS), a multiproteic complex at the ER membrane that consists of an association between cholestenol Delta-isomerase/EBP and DHCR7. This complex is responsible for cholesterol-5,6-epoxide hydrolase (ChEH) activity, which consists in the hydration of cholesterol-5,6-epoxides (5,6-EC) into cholestane-3beta,5alpha,6beta-triol (CT). The precise role of each component of this complex has not been described yet. The polypeptide is 7-dehydrocholesterol reductase (Homo sapiens (Human)).